The primary structure comprises 150 residues: Sulfur-rich protein, serovars L1/L3 (150 aa).

Positions 1–20 are disordered; that stretch reads MSTVPVVQGAGSSNSAQDIS. 2 consecutive transmembrane segments (helical) span residues 43–63 and 69–89; these read VGLV…VSAA and IYLA…ILSM.

The protein resides in the membrane. This is Sulfur-rich protein, serovars L1/L3 (srp) from Chlamydia trachomatis.